The following is a 471-amino-acid chain: Ribulose bisphosphate carboxylase large chain 2 (471 aa).

Substrate is bound by residues N116 and T166. Residue K168 is the Proton acceptor of the active site. Position 170 (K170) interacts with substrate. Mg(2+)-binding residues include K194, D196, and E197. An N6-carboxylysine modification is found at K194. Catalysis depends on H287, which acts as the Proton acceptor. Residues R288, H320, and S372 each coordinate substrate.

It belongs to the RuBisCO large chain family. Type I subfamily. In terms of assembly, heterohexadecamer of 8 large chains and 8 small chains; disulfide-linked. The disulfide link is formed within the large subunit homodimers. Requires Mg(2+) as cofactor. The disulfide bond which can form in the large chain dimeric partners within the hexadecamer appears to be associated with oxidative stress and protein turnover.

The enzyme catalyses 2 (2R)-3-phosphoglycerate + 2 H(+) = D-ribulose 1,5-bisphosphate + CO2 + H2O. It catalyses the reaction D-ribulose 1,5-bisphosphate + O2 = 2-phosphoglycolate + (2R)-3-phosphoglycerate + 2 H(+). RuBisCO catalyzes two reactions: the carboxylation of D-ribulose 1,5-bisphosphate, the primary event in carbon dioxide fixation, as well as the oxidative fragmentation of the pentose substrate. Both reactions occur simultaneously and in competition at the same active site. The chain is Ribulose bisphosphate carboxylase large chain 2 from Allochromatium vinosum (strain ATCC 17899 / DSM 180 / NBRC 103801 / NCIMB 10441 / D) (Chromatium vinosum).